Here is a 237-residue protein sequence, read N- to C-terminus: MLTRKQHELLMFIHERIKEGGVSPSFDEMKEALDLRSKSGIHRLITALEERGFIRRLPHRARALEILKLPDAASPSLAMARGRGFSPSVIEGGAQPKPSSRDLAPARSSGDTMTLSVMGRIAAGTPIEALQEESHQVSVPLNLLGSGEHYALEVKGDSMIEAGILDGDTVLIQRCDTATSGDIVVALVDGYEATLKRLRKKGDSIALEAANPAYETRIFGPDRVKVQGKLVGLLRRY.

A DNA-binding region (H-T-H motif) is located at residues 26-46 (FDEMKEALDLRSKSGIHRLIT). Residues 84–110 (GFSPSVIEGGAQPKPSSRDLAPARSSG) form a disordered region. Active-site for autocatalytic cleavage activity residues include serine 158 and lysine 196.

The protein belongs to the peptidase S24 family. Homodimer.

It catalyses the reaction Hydrolysis of Ala-|-Gly bond in repressor LexA.. Functionally, represses a number of genes involved in the response to DNA damage (SOS response), including recA and lexA. In the presence of single-stranded DNA, RecA interacts with LexA causing an autocatalytic cleavage which disrupts the DNA-binding part of LexA, leading to derepression of the SOS regulon and eventually DNA repair. The polypeptide is LexA repressor (Parvibaculum lavamentivorans (strain DS-1 / DSM 13023 / NCIMB 13966)).